The following is a 265-amino-acid chain: 4-hydroxy-tetrahydrodipicolinate reductase (265 aa).

Gly-9–Met-14 contributes to the NAD(+) binding site. NADP(+) is bound at residue Lys-37. Residues Gly-99–Thr-101 and Ala-125–Phe-128 each bind NAD(+). The active-site Proton donor/acceptor is His-155. His-156 lines the (S)-2,3,4,5-tetrahydrodipicolinate pocket. Lys-159 acts as the Proton donor in catalysis. Gly-165 to Thr-166 lines the (S)-2,3,4,5-tetrahydrodipicolinate pocket.

It belongs to the DapB family.

Its subcellular location is the cytoplasm. It catalyses the reaction (S)-2,3,4,5-tetrahydrodipicolinate + NAD(+) + H2O = (2S,4S)-4-hydroxy-2,3,4,5-tetrahydrodipicolinate + NADH + H(+). It carries out the reaction (S)-2,3,4,5-tetrahydrodipicolinate + NADP(+) + H2O = (2S,4S)-4-hydroxy-2,3,4,5-tetrahydrodipicolinate + NADPH + H(+). It participates in amino-acid biosynthesis; L-lysine biosynthesis via DAP pathway; (S)-tetrahydrodipicolinate from L-aspartate: step 4/4. In terms of biological role, catalyzes the conversion of 4-hydroxy-tetrahydrodipicolinate (HTPA) to tetrahydrodipicolinate. This is 4-hydroxy-tetrahydrodipicolinate reductase from Lysinibacillus sphaericus (strain C3-41).